Here is a 478-residue protein sequence, read N- to C-terminus: Dihydrolipoyl dehydrogenase (478 aa).

FAD-binding positions include 34-49, lysine 58, and glycine 122; that span reads EKYI…GGTC. The cysteines at positions 49 and 54 are disulfide-linked. Residues 188–192, glutamate 211, valine 245, and 276–279 contribute to the NAD(+) site; these read GAGVI and AVGR. The FAD site is built by aspartate 319 and alanine 327. Histidine 451 acts as the Proton acceptor in catalysis.

The protein belongs to the class-I pyridine nucleotide-disulfide oxidoreductase family. Homodimer. FAD serves as cofactor.

It is found in the cytoplasm. It carries out the reaction N(6)-[(R)-dihydrolipoyl]-L-lysyl-[protein] + NAD(+) = N(6)-[(R)-lipoyl]-L-lysyl-[protein] + NADH + H(+). The branched-chain alpha-keto dehydrogenase complex catalyzes the overall conversion of alpha-keto acids to acyl-CoA and CO(2). It contains multiple copies of 3 enzymatic components: branched-chain alpha-keto acid decarboxylase (E1), lipoamide acyltransferase (E2) and lipoamide dehydrogenase (E3). Functionally, also acts in the glycine cleavage system. This Pseudomonas aeruginosa (strain ATCC 15692 / DSM 22644 / CIP 104116 / JCM 14847 / LMG 12228 / 1C / PRS 101 / PAO1) protein is Dihydrolipoyl dehydrogenase (lpdG).